We begin with the raw amino-acid sequence, 397 residues long: Phosphoglycerate kinase (397 aa).

Substrate is bound by residues 21–23 (DFN), Arg-37, 60–63 (HLGR), Arg-119, and Arg-152. Residues Lys-203, Gly-294, Glu-325, and 354-357 (GGDS) contribute to the ATP site.

Belongs to the phosphoglycerate kinase family. As to quaternary structure, monomer.

The protein resides in the cytoplasm. The catalysed reaction is (2R)-3-phosphoglycerate + ATP = (2R)-3-phospho-glyceroyl phosphate + ADP. The protein operates within carbohydrate degradation; glycolysis; pyruvate from D-glyceraldehyde 3-phosphate: step 2/5. In Chlorobium chlorochromatii (strain CaD3), this protein is Phosphoglycerate kinase.